The primary structure comprises 1220 residues: Cullin-associated NEDD8-dissociated protein 1 (1220 aa).

12 HEAT repeats span residues 1-35 (MEEGILLKKYVESSDKDIRYMALSDLAARLNDANH), 42-79 (ESFPDTLDVLLQALSDASPEVQQEAVRCVAIISSKIPQ), 121-157 (FYTSTVFPSFLQILKQYNVAQEEFFAILCVVCDSLEI), 259-295 (ADYTNKILSLLKKEEAPDELTQKLLEVLGLLLEYQQV), 365-410 (LSRL…HVPR), 615-650 (IFLRRVLIILCKKLQEEPTRSAAARALCDIFMSVTD), 680-700 (TTAYLELLEVLLKVGQKYLAE), 701-737 (SLLEHILGLLIETLKRNTENTVAILKCLLIIPLSILL), 738-775 (KSKNLLIDTIISHLQSSTIHLNEESVCLLSRIIAVISK), 810-847 (FQSKAIVTSLNKSFMSPKSEVRIKVFTTLIFGQLDYGK), 850-887 (LPANEYFDTIASNLNSPNADVMKAAAIALGSLTSQSEK), and 1020-1057 (EVSQETLQVIISVIKNRRSCIADVYNELLQGLISKSSV).

It belongs to the CAND family.

Its subcellular location is the nucleus. In terms of biological role, key assembly factor of SCF (SKP1-CUL1-F-box protein) E3 ubiquitin ligase complexes that promotes the exchange of the substrate-recognition F-box subunit in SCF complexes, thereby playing a key role in the cellular repertoire of SCF complexes. Acts as a F-box protein exchange factor. The protein is Cullin-associated NEDD8-dissociated protein 1 (knd1) of Schizosaccharomyces pombe (strain 972 / ATCC 24843) (Fission yeast).